The primary structure comprises 60 residues: Transcriptional regulatory protein SenN (60 aa).

The segment at residues arginine 11–lysine 31 is a DNA-binding region (H-T-H motif).

This sequence to B.subtilis SenS.

Regulates the expression of extracellular-protein genes of Bacillus natto. The protein is Transcriptional regulatory protein SenN (senN) of Bacillus subtilis subsp. natto.